The primary structure comprises 722 residues: Transmembrane channel-like protein 8 (722 aa).

The disordered stretch occupies residues 1–21 (MFRQWSVQSGPAPRRPESQAA). Residues 1–118 (MFRQWSVQSG…GIQSYFTFLR (118 aa)) are Cytoplasmic-facing. Ser6 and Ser18 each carry phosphoserine. The chain crosses the membrane as a helical span at residues 119-139 (FLLLLNLLTMLLTACFVLLPL). Residues 140–204 (VWLRPPELGP…AGPESSSEYS (65 aa)) lie on the Lumenal side of the membrane. Residue Asn184 is glycosylated (N-linked (GlcNAc...) asparagine). A helical membrane pass occupies residues 205 to 225 (IRLAYLLSPMVCLLLCFCGIL). The Cytoplasmic portion of the chain corresponds to 226 to 307 (QRMAEGLPQQ…CRLLTYLRTN (82 aa)). The helical transmembrane segment at 308–328 (ILIVLLVVGAISAIFWATKYS) threads the bilayer. Residues 329 to 375 (QDNKEESLFLVLQYLPPGVISLVNFLGPQLFTVLIQLENYPPGTEVN) are Lumenal-facing. Positions 366–534 (ENYPPGTEVN…SPRRFRASSS (169 aa)) are TMC domain. A glycan (N-linked (GlcNAc...) asparagine) is linked at Asn375. Residues 376 to 396 (LTLIWCVVLKLASLGMFSFSL) form a helical membrane-spanning segment. At 397–430 (GQTVLCIGRNKTSCESYGYNACDYQCWENSVGEE) the chain is on the cytoplasmic side. The helical transmembrane segment at 431-451 (LYKLIIFNFLLTVAFAFLVSL) threads the bilayer. The Lumenal portion of the chain corresponds to 452–492 (PRRLLVERFSGWFWTWLDREEFLVPKNVLDIVAAQTVTWMG). A helical membrane pass occupies residues 493–513 (LFYCPLLPLLNSVFLFLTFYI). Over 514 to 536 (KKYTLLRNSRASPRRFRASSSTF) the chain is Cytoplasmic. The chain crosses the membrane as a helical span at residues 537 to 557 (FFHLVLLLGLLLAAVPLAYVI). Residues 558–598 (SSTHSSWDCGLFTNYSAPWQVVPELVALQLPLPSQRALRYL) lie on the Lumenal side of the membrane. N-linked (GlcNAc...) asparagine glycosylation occurs at Asn571. The chain crosses the membrane as a helical span at residues 599 to 619 (SSHAFSFPLLILLSIVLTVCI). Over 620 to 722 (SQSRANARAI…RFHFPSRTEL (103 aa)) the chain is Cytoplasmic. Residues Ser658, Ser663, and Ser673 each carry the phosphoserine modification. Residues 658–722 (SPEPGSPHSR…RFHFPSRTEL (65 aa)) form a disordered region. Residues 678-687 (FPCPGSPGPR) are compositionally biased toward pro residues. Over residues 689–712 (PRLAPSNRLSSSSLGAPSASVPAS) the composition is skewed to low complexity. Ser698 is subject to Phosphoserine.

The protein belongs to the TMC family. Interacts with TMC6. Interacts and forms a complex with TMC6 and CIB1; the interaction stabilizes each component of the complex. Interacts and forms a complex with TMC6 and SLC30A1/ZNT1; the interaction regulates zinc transport into the ER. Interacts with TRADD; the interaction competes with TRADD/RIPK1/TRAF2/cIAPs complex I formation and facilites complex II formation. Expressed in thymus, lung, prostate, placenta, testis and spleen. Expressed in lymphocytes and peripheral lymphocytes.

Its subcellular location is the endoplasmic reticulum membrane. The protein localises to the golgi apparatus membrane. It is found in the nucleus membrane. In terms of biological role, acts as a regulatory protein involved in the regulation of numerous cellular processes. Together with its homolog TMC6/EVER1, forms a complex with calcium-binding protein CIB1 in lymphocytes and keratynocytes where TMC6 and TMC8 stabilize CIB1 levels and reciprocally. Together with TMC6, also forms a complex with and activates zinc transporter ZNT1 at the ER membrane of keratynocytes, thereby facilitating zinc uptake into the ER. Also inhibits receptor-mediated calcium release from ER stores and calcium activated and volume regulated chloride channels. Down-regulates the activity of transcription factors induced by zinc and cytokines. Also sequesters TRADD which impairs the recruitment of TRAF2 and RIPK1 in the pro-survival complex I and promotes proapoptotic complex II formation, and may therefore be involved in TNF-induced cell death/survival decisions. The sequence is that of Transmembrane channel-like protein 8 from Mus musculus (Mouse).